The chain runs to 502 residues: Probable malate:quinone oxidoreductase 1 (502 aa).

The protein belongs to the MQO family. Requires FAD as cofactor.

It catalyses the reaction (S)-malate + a quinone = a quinol + oxaloacetate. Its pathway is carbohydrate metabolism; tricarboxylic acid cycle; oxaloacetate from (S)-malate (quinone route): step 1/1. This Pseudomonas putida (strain ATCC 47054 / DSM 6125 / CFBP 8728 / NCIMB 11950 / KT2440) protein is Probable malate:quinone oxidoreductase 1.